The chain runs to 195 residues: Putative inactive carbonic anhydrase 5B-like protein (195 aa).

121–122 (TT) contributes to the substrate binding site.

The protein belongs to the alpha-carbonic anhydrase family.

This chain is Putative inactive carbonic anhydrase 5B-like protein (CA5BP1), found in Homo sapiens (Human).